A 569-amino-acid polypeptide reads, in one-letter code: Melanophilin (569 aa).

The RabBD domain occupies 4–124 (KLDLSKLTDD…MGSLEWYYGH (121 aa)). Residues 58 to 112 (HLNETHCARCLQPYRLLVAPKRQCLDCHLFTCQDCSHAHPEEEGWLCDPCHLARV) form an FYVE-type zinc finger. Residues 143 to 430 (GRLQGGGGPE…MQPGRTTDQE (288 aa)) form a disordered region. Basic and acidic residues-rich tracts occupy residues 352–362 (ETLKRKLEEMT) and 379–390 (EEEAGLNRKTSI). Residues 404 to 415 (SGQTSRQETSPR) are compositionally biased toward polar residues. Residues 431–465 (LLELEDRVAVTASEVQQVESEVSNIKSKIAALQAA) adopt a coiled-coil conformation. Residues 490–569 (GRLGQTPKDP…FAKPVMTQRP (80 aa)) are disordered. The segment covering 526–535 (SQDKAGDSFD) has biased composition (basic and acidic residues).

In terms of assembly, binds RAB27A that has been activated by GTP-binding via its N-terminus. Binds MYO5A via its C-terminal coiled coil domain.

The protein resides in the melanosome. Its function is as follows. Rab effector protein involved in melanosome transport. Serves as link between melanosome-bound RAB27A and the motor protein MYO5A. This is Melanophilin (MLPH) from Felis catus (Cat).